Reading from the N-terminus, the 195-residue chain is Interferon tau-8 (195 aa).

The signal sequence occupies residues 1-23 (MAFVLSLLMALVLVSYGPGGSLG). 2 disulfides stabilise this stretch: C24–C122 and C52–C162.

The protein belongs to the alpha/beta interferon family. IFN-alphaII subfamily. Constitutively and exclusively expressed in the mononuclear cells of the extraembryonic trophectoderm.

It localises to the secreted. In terms of biological role, paracrine hormone primarily responsible for maternal recognition of pregnancy. Interacts with endometrial receptors, probably type I interferon receptors, and blocks estrogen receptor expression, preventing the estrogen-induced increase in oxytocin receptor expression in the endometrium. This results in the suppression of the pulsatile endometrial release of the luteolytic hormone prostaglandin F2-alpha, hindering the regression of the corpus luteum (luteolysis) and therefore a return to ovarian cyclicity. This, and a possible direct effect of IFN-tau on prostaglandin synthesis, leads in turn to continued ovarian progesterone secretion, which stimulates the secretion by the endometrium of the nutrients required for the growth of the conceptus. In summary, displays particularly high antiviral and antiproliferative potency concurrently with particular weak cytotoxicity, high antiluteolytic activity and immunomodulatory properties. In contrast with other IFNs, IFN-tau is not virally inducible. The polypeptide is Interferon tau-8 (IFNT8) (Ovis aries (Sheep)).